The following is a 126-amino-acid chain: Cysteine-rich tail protein 1 (126 aa).

A disordered region spans residues 1-89 (MDPHETLVKN…PAGLAYAGPP (89 aa)).

It belongs to the CYSRT1 family. Interacts with components of the late cornfied envelope (LCE).

It is found in the cornified envelope. Component of the stratum corneum that may contribute to epidermal antimicrobial host defenses. This is Cysteine-rich tail protein 1 (CYSRT1) from Bos taurus (Bovine).